The chain runs to 290 residues: Protoheme IX farnesyltransferase 1 (290 aa).

8 helical membrane-spanning segments follow: residues 8–28 (ITKP…FFLA), 36–56 (FLLL…GCVV), 85–105 (AAFV…FQVV), 108–128 (LSAV…TMWY), 131–151 (NSVY…LVGY), 152–172 (LAVT…FCLW), 211–231 (AYVV…EAGY), and 269–289 (LLVV…LPFI).

It belongs to the UbiA prenyltransferase family. Protoheme IX farnesyltransferase subfamily.

It is found in the cell inner membrane. It carries out the reaction heme b + (2E,6E)-farnesyl diphosphate + H2O = Fe(II)-heme o + diphosphate. It participates in porphyrin-containing compound metabolism; heme O biosynthesis; heme O from protoheme: step 1/1. In terms of biological role, converts heme B (protoheme IX) to heme O by substitution of the vinyl group on carbon 2 of heme B porphyrin ring with a hydroxyethyl farnesyl side group. This chain is Protoheme IX farnesyltransferase 1, found in Vibrio campbellii (strain ATCC BAA-1116).